We begin with the raw amino-acid sequence, 250 residues long: Octanoyltransferase (250 aa).

A BPL/LPL catalytic domain is found at 44–224 (GAGSDRLLLL…AVVQALNGDL (181 aa)). Substrate is bound by residues 82–89 (RGGKITWH), 154–156 (AIG), and 167–169 (GIS). The Acyl-thioester intermediate role is filled by Cys185. The disordered stretch occupies residues 224 to 250 (LPVRDHDLPRPGTTPAAPNSTRVRSMT). Over residues 239-250 (AAPNSTRVRSMT) the composition is skewed to polar residues.

The protein belongs to the LipB family.

The protein localises to the cytoplasm. It catalyses the reaction octanoyl-[ACP] + L-lysyl-[protein] = N(6)-octanoyl-L-lysyl-[protein] + holo-[ACP] + H(+). The protein operates within protein modification; protein lipoylation via endogenous pathway; protein N(6)-(lipoyl)lysine from octanoyl-[acyl-carrier-protein]: step 1/2. Functionally, catalyzes the transfer of endogenously produced octanoic acid from octanoyl-acyl-carrier-protein onto the lipoyl domains of lipoate-dependent enzymes. Lipoyl-ACP can also act as a substrate although octanoyl-ACP is likely to be the physiological substrate. The chain is Octanoyltransferase from Nocardia farcinica (strain IFM 10152).